The primary structure comprises 505 residues: Protein disulfide-isomerase (505 aa).

Residues 1 to 20 form the signal peptide; that stretch reads MHKAQKFALGLLAAAAVATA. Thioredoxin domains are found at residues 21-128 and 335-465; these read SDVV…QSLP and FVAG…ENGK. Residues C50, C53, C385, and C388 each act as nucleophile in the active site. 2 cysteine pairs are disulfide-bonded: C50-C53 and C385-C388. The disordered stretch occupies residues 470-505; the sequence is ISEDAEETSSATETTTETATKSEEAAKETATEHDEL. Over residues 477-488 the composition is skewed to low complexity; the sequence is TSSATETTTETA. A compositionally biased stretch (basic and acidic residues) spans 489–505; the sequence is TKSEEAAKETATEHDEL. The short motif at 502–505 is the Prevents secretion from ER element; sequence HDEL.

Belongs to the protein disulfide isomerase family.

Its subcellular location is the endoplasmic reticulum lumen. It carries out the reaction Catalyzes the rearrangement of -S-S- bonds in proteins.. In terms of biological role, participates in the folding of proteins containing disulfide bonds, may be involved in glycosylation, prolyl hydroxylation and triglyceride transfer. This Humicola insolens (Soft-rot fungus) protein is Protein disulfide-isomerase.